Here is a 136-residue protein sequence, read N- to C-terminus: Large ribosomal subunit protein uL16 (136 aa).

It belongs to the universal ribosomal protein uL16 family. In terms of assembly, part of the 50S ribosomal subunit.

In terms of biological role, binds 23S rRNA and is also seen to make contacts with the A and possibly P site tRNAs. This Rickettsia massiliae (strain Mtu5) protein is Large ribosomal subunit protein uL16.